A 185-amino-acid chain; its full sequence is Elongation factor P (185 aa).

The protein belongs to the elongation factor P family.

Its subcellular location is the cytoplasm. Its pathway is protein biosynthesis; polypeptide chain elongation. In terms of biological role, involved in peptide bond synthesis. Stimulates efficient translation and peptide-bond synthesis on native or reconstituted 70S ribosomes in vitro. Probably functions indirectly by altering the affinity of the ribosome for aminoacyl-tRNA, thus increasing their reactivity as acceptors for peptidyl transferase. This is Elongation factor P from Kosmotoga olearia (strain ATCC BAA-1733 / DSM 21960 / TBF 19.5.1).